The primary structure comprises 555 residues: DNA-directed primase/polymerase protein (555 aa).

Positions 1-22 (MKRKWEATLKQIEERASHYERK) form a coiled coil. Substrate-binding positions include arginine 76, 114–116 (DLE), and 165–169 (KFSRH). 2 residues coordinate Mn(2+): aspartate 114 and glutamate 116. Positions 210–230 (ETTGHEFTHFSETPSEQGTCF) are disordered. Residues 219 to 230 (FSETPSEQGTCF) are compositionally biased toward polar residues. At serine 255 the chain carries Phosphoserine. Residues 288-291 (RNFR) and lysine 297 each bind substrate. 4 residues coordinate Zn(2+): cysteine 418, histidine 425, cysteine 445, and cysteine 450. Residues 418–451 (CENIGRAHRSNNIMILVDLKNEVWYQKCHDPVCK) carry the Zinc knuckle motif motif. The tract at residues 480–503 (TDTTADTETKSPHGPSSSVLSKGA) is disordered. An interaction with RPA1 region spans residues 480–555 (TDTTADTETK…DELLIEVLQE (76 aa)). Short sequence motifs (RPA1-binding motif) lie at residues 509-523 (WDNG…EATE) and 543-551 (EIPDELLIE).

This sequence belongs to the eukaryotic-type primase small subunit family. Interacts with RPA1; leading to recruitment to chromatin and stimulate DNA primase activity. Interacts with SSBP1. Interacts with POLDIP2; leading to enhance DNA polymerase activity. It depends on Mn(2+) as a cofactor.

It is found in the nucleus. Its subcellular location is the mitochondrion matrix. The protein resides in the chromosome. It catalyses the reaction ssDNA + n NTP = ssDNA/pppN(pN)n-1 hybrid + (n-1) diphosphate.. The enzyme catalyses DNA(n) + a 2'-deoxyribonucleoside 5'-triphosphate = DNA(n+1) + diphosphate. In terms of biological role, DNA primase and DNA polymerase required to tolerate replication-stalling lesions by bypassing them. Required to facilitate mitochondrial and nuclear replication fork progression by initiating de novo DNA synthesis using dNTPs and acting as an error-prone DNA polymerase able to bypass certain DNA lesions. Shows a high capacity to tolerate DNA damage lesions such as 8oxoG and abasic sites in DNA. Provides different translesion synthesis alternatives when DNA replication is stalled: able to synthesize DNA primers downstream of lesions, such as ultraviolet (UV) lesions, R-loops and G-quadruplexes, to allow DNA replication to continue. Can also realign primers ahead of 'unreadable lesions' such as abasic sites and 6-4 photoproduct (6-4 pyrimidine-pyrimidinone), thereby skipping the lesion. Repriming avoids fork degradation while leading to accumulation of internal ssDNA gaps behind the forks. Also able to incorporate nucleotides opposite DNA lesions such as 8oxoG, like a regular translesion synthesis DNA polymerase. Also required for reinitiating stalled forks after UV damage during nuclear DNA replication. Required for mitochondrial DNA (mtDNA) synthesis and replication, by reinitiating synthesis after UV damage or in the presence of chain-terminating nucleotides. Prevents APOBEC family-mediated DNA mutagenesis by repriming downstream of abasic site to prohibit error-prone translesion synthesis. Has non-overlapping function with POLH. In addition to its role in DNA damage response, also required to maintain efficient nuclear and mitochondrial DNA replication in unperturbed cells. This is DNA-directed primase/polymerase protein from Bos taurus (Bovine).